Consider the following 600-residue polypeptide: NADH-quinone oxidoreductase subunit C/D (600 aa).

Residues 1 to 190 (MIDLMPKKNT…EPFFLNEQKE (190 aa)) are NADH dehydrogenase I subunit C. Residues 214-600 (EFMFLNLGPN…IDFVMSDVDR (387 aa)) are NADH dehydrogenase I subunit D.

The protein in the N-terminal section; belongs to the complex I 30 kDa subunit family. It in the C-terminal section; belongs to the complex I 49 kDa subunit family. As to quaternary structure, NDH-1 is composed of 13 different subunits. Subunits NuoB, CD, E, F, and G constitute the peripheral sector of the complex.

The protein localises to the cell inner membrane. It catalyses the reaction a quinone + NADH + 5 H(+)(in) = a quinol + NAD(+) + 4 H(+)(out). Its function is as follows. NDH-1 shuttles electrons from NADH, via FMN and iron-sulfur (Fe-S) centers, to quinones in the respiratory chain. The immediate electron acceptor for the enzyme in this species is believed to be ubiquinone. Couples the redox reaction to proton translocation (for every two electrons transferred, four hydrogen ions are translocated across the cytoplasmic membrane), and thus conserves the redox energy in a proton gradient. The protein is NADH-quinone oxidoreductase subunit C/D of Buchnera aphidicola subsp. Acyrthosiphon pisum (strain APS) (Acyrthosiphon pisum symbiotic bacterium).